Consider the following 254-residue polypeptide: Thiazole synthase (254 aa).

The active-site Schiff-base intermediate with DXP is the lysine 95. 1-deoxy-D-xylulose 5-phosphate contacts are provided by residues glycine 156, alanine 182–glycine 183, and asparagine 204–threonine 205.

It belongs to the ThiG family. As to quaternary structure, homotetramer. Forms heterodimers with either ThiH or ThiS.

Its subcellular location is the cytoplasm. It catalyses the reaction [ThiS sulfur-carrier protein]-C-terminal-Gly-aminoethanethioate + 2-iminoacetate + 1-deoxy-D-xylulose 5-phosphate = [ThiS sulfur-carrier protein]-C-terminal Gly-Gly + 2-[(2R,5Z)-2-carboxy-4-methylthiazol-5(2H)-ylidene]ethyl phosphate + 2 H2O + H(+). The protein operates within cofactor biosynthesis; thiamine diphosphate biosynthesis. Catalyzes the rearrangement of 1-deoxy-D-xylulose 5-phosphate (DXP) to produce the thiazole phosphate moiety of thiamine. Sulfur is provided by the thiocarboxylate moiety of the carrier protein ThiS. In vitro, sulfur can be provided by H(2)S. This is Thiazole synthase from Shewanella baltica (strain OS195).